Here is a 144-residue protein sequence, read N- to C-terminus: 6-pyruvoyl tetrahydrobiopterin synthase (144 aa).

S18 carries the phosphoserine modification. H23 is a binding site for Zn(2+). The residue at position 27 (S27) is a Phosphoserine. The active-site Proton acceptor is C42. Zn(2+)-binding residues include H48 and H50. Residue H89 is the Charge relay system of the active site. Y127 carries the phosphotyrosine modification. The active-site Charge relay system is the E133.

The protein belongs to the PTPS family. As to quaternary structure, homodimer. Homohexamer formed of two homotrimers in a head to head fashion. It depends on Zn(2+) as a cofactor. Post-translationally, phosphorylation of Ser-18 is required for maximal enzyme activity.

It carries out the reaction 7,8-dihydroneopterin 3'-triphosphate = 6-pyruvoyl-5,6,7,8-tetrahydropterin + triphosphate + H(+). Its pathway is cofactor biosynthesis; tetrahydrobiopterin biosynthesis; tetrahydrobiopterin from 7,8-dihydroneopterin triphosphate: step 1/3. In terms of biological role, involved in the biosynthesis of tetrahydrobiopterin, an essential cofactor of aromatic amino acid hydroxylases. Catalyzes the transformation of 7,8-dihydroneopterin triphosphate into 6-pyruvoyl tetrahydropterin. This is 6-pyruvoyl tetrahydrobiopterin synthase from Mus musculus (Mouse).